A 199-amino-acid polypeptide reads, in one-letter code: Thioredoxin reductase-like selenoprotein T (199 aa).

The first 24 residues, 1–24 (MRAAGLGLGIGLLLLAALAGPGGS), serve as a signal peptide directing secretion. A cross-link (cysteinyl-selenocysteine (Cys-Sec)) is located at residues 50 to 53 (CVSU). Position 53 (selenocysteine 53) is a non-standard amino acid, selenocysteine. A helical transmembrane segment spans residues 95–115 (VFKLVLIGLIIVGKDPFAFFG).

It belongs to the SelWTH family. Selenoprotein T subfamily. Post-translationally, may contain a selenide-sulfide bond between Cys-50 and Sec-53. This bond is speculated to serve as redox-active pair.

Its subcellular location is the endoplasmic reticulum membrane. The enzyme catalyses [thioredoxin]-dithiol + NADP(+) = [thioredoxin]-disulfide + NADPH + H(+). Functionally, selenoprotein with thioredoxin reductase-like oxidoreductase activity. The protein is Thioredoxin reductase-like selenoprotein T of Gallus gallus (Chicken).